Here is a 289-residue protein sequence, read N- to C-terminus: MKTQQSYQQRDDKGTLYLVATPIGNLEDVTFRAIRTLKEADQIAAEDTRQTKKLLNHFDIATKLVSYHEHNKETMGKRLIDDLIEGRTIALVSDAGMPAISDPGYELVVSAIKEGIAVIPIPGANAAVTALIASGLPTESFQFIGFLPRQKKQRRQALEETKPTKATLIFYESPHRLKDTLDDMLLILGNRHVSICRELTKTYEEFLRGTLEEAVHWAREATIKGEFCLIVEGNGEKVEPEEVWWESLSPVQHVEHYIALGFRSKEAIKQVATDRGVPKRDIYNIYHQE.

This sequence belongs to the methyltransferase superfamily. RsmI family.

It is found in the cytoplasm. It catalyses the reaction cytidine(1402) in 16S rRNA + S-adenosyl-L-methionine = 2'-O-methylcytidine(1402) in 16S rRNA + S-adenosyl-L-homocysteine + H(+). Functionally, catalyzes the 2'-O-methylation of the ribose of cytidine 1402 (C1402) in 16S rRNA. In Halalkalibacterium halodurans (strain ATCC BAA-125 / DSM 18197 / FERM 7344 / JCM 9153 / C-125) (Bacillus halodurans), this protein is Ribosomal RNA small subunit methyltransferase I.